Here is a 1033-residue protein sequence, read N- to C-terminus: Translation initiation factor IF-2 (1033 aa).

The segment at 49–432 (AFQQGGGNGR…APSVGGVMLP (384 aa)) is disordered. Over residues 59 to 113 (SAGRPAAPKKAAPRPSAPSPAQAGPSQAAPAAGDRAAAPRPSAAPKAPAAQQPAA) the composition is skewed to low complexity. Pro residues-rich tracts occupy residues 114 to 140 (PSAP…PAPA) and 148 to 164 (PAAP…PSGP). The segment covering 171-189 (PGAPKPGGARPSGPGQDRG) has biased composition (low complexity). Residues 190-201 (QQGGQGRPGGQR) show a composition bias toward gly residues. A compositionally biased stretch (pro residues) spans 236–246 (APRPQGGPRPG). A compositionally biased stretch (gly residues) spans 247 to 268 (GPGGAPGGGPRPQGPGGQGGGP). The segment covering 305–314 (MMPQRPAAGP) has biased composition (low complexity). A compositionally biased stretch (gly residues) spans 318 to 401 (PGGGGRGPGG…GTQGAFGRPG (84 aa)). Over residues 405–414 (RRGRKSKRQR) the composition is skewed to basic residues. One can recognise a tr-type G domain in the interval 526 to 698 (VRPPVVTVMG…VVLTADASLD (173 aa)). The segment at 535 to 542 (GHVDHGKT) is G1. A GTP-binding site is contributed by 535–542 (GHVDHGKT). A G2 region spans residues 560-564 (GITQH). The segment at 585-588 (DTPG) is G3. GTP is bound by residues 585-589 (DTPGH) and 639-642 (NKID). A G4 region spans residues 639 to 642 (NKID). The tract at residues 675 to 677 (SAK) is G5.

This sequence belongs to the TRAFAC class translation factor GTPase superfamily. Classic translation factor GTPase family. IF-2 subfamily.

It is found in the cytoplasm. One of the essential components for the initiation of protein synthesis. Protects formylmethionyl-tRNA from spontaneous hydrolysis and promotes its binding to the 30S ribosomal subunits. Also involved in the hydrolysis of GTP during the formation of the 70S ribosomal complex. The sequence is that of Translation initiation factor IF-2 from Streptomyces coelicolor (strain ATCC BAA-471 / A3(2) / M145).